The primary structure comprises 367 residues: Histidinol-phosphate aminotransferase (367 aa).

Lys226 carries the N6-(pyridoxal phosphate)lysine modification.

The protein belongs to the class-II pyridoxal-phosphate-dependent aminotransferase family. Histidinol-phosphate aminotransferase subfamily. As to quaternary structure, homodimer. Requires pyridoxal 5'-phosphate as cofactor.

The catalysed reaction is L-histidinol phosphate + 2-oxoglutarate = 3-(imidazol-4-yl)-2-oxopropyl phosphate + L-glutamate. It participates in amino-acid biosynthesis; L-histidine biosynthesis; L-histidine from 5-phospho-alpha-D-ribose 1-diphosphate: step 7/9. The chain is Histidinol-phosphate aminotransferase from Wolinella succinogenes (strain ATCC 29543 / DSM 1740 / CCUG 13145 / JCM 31913 / LMG 7466 / NCTC 11488 / FDC 602W) (Vibrio succinogenes).